Consider the following 445-residue polypeptide: tRNA-2-methylthio-N(6)-dimethylallyladenosine synthase (445 aa).

The MTTase N-terminal domain occupies 3–124 (KKLYIKTYGC…LPELISKVVR (122 aa)). Cysteine 12, cysteine 48, cysteine 87, cysteine 162, cysteine 166, and cysteine 169 together coordinate [4Fe-4S] cluster. The 233-residue stretch at 148-380 (YPQGTSAFIS…QQELMAQQLA (233 aa)) folds into the Radical SAM core domain. In terms of domain architecture, TRAM spans 383 to 445 (TSCVGSTMKV…SLNSLTGEIL (63 aa)).

It belongs to the methylthiotransferase family. MiaB subfamily. In terms of assembly, monomer. Requires [4Fe-4S] cluster as cofactor.

It is found in the cytoplasm. It catalyses the reaction N(6)-dimethylallyladenosine(37) in tRNA + (sulfur carrier)-SH + AH2 + 2 S-adenosyl-L-methionine = 2-methylsulfanyl-N(6)-dimethylallyladenosine(37) in tRNA + (sulfur carrier)-H + 5'-deoxyadenosine + L-methionine + A + S-adenosyl-L-homocysteine + 2 H(+). Catalyzes the methylthiolation of N6-(dimethylallyl)adenosine (i(6)A), leading to the formation of 2-methylthio-N6-(dimethylallyl)adenosine (ms(2)i(6)A) at position 37 in tRNAs that read codons beginning with uridine. The sequence is that of tRNA-2-methylthio-N(6)-dimethylallyladenosine synthase from Rickettsia rickettsii (strain Iowa).